The sequence spans 162 residues: Serine-protein kinase RsbW (162 aa).

It belongs to the anti-sigma-factor family.

The enzyme catalyses L-seryl-[protein] + ATP = O-phospho-L-seryl-[protein] + ADP + H(+). The catalysed reaction is L-threonyl-[protein] + ATP = O-phospho-L-threonyl-[protein] + ADP + H(+). Negative regulator of sigma-B activity. Phosphorylates and inactivates its specific antagonist protein, RsbV. Upon phosphorylation of RsbV, RsbW is released and binds to sigma-B, thereby blocking its ability to form an RNA polymerase holoenzyme (E-sigma-B). This chain is Serine-protein kinase RsbW, found in Bacillus pumilus (strain SAFR-032).